We begin with the raw amino-acid sequence, 116 residues long: Large ribosomal subunit protein uL18 (116 aa).

The protein belongs to the universal ribosomal protein uL18 family. As to quaternary structure, part of the 50S ribosomal subunit; part of the 5S rRNA/L5/L18/L25 subcomplex. Contacts the 5S and 23S rRNAs.

In terms of biological role, this is one of the proteins that bind and probably mediate the attachment of the 5S RNA into the large ribosomal subunit, where it forms part of the central protuberance. The protein is Large ribosomal subunit protein uL18 of Caulobacter vibrioides (strain ATCC 19089 / CIP 103742 / CB 15) (Caulobacter crescentus).